We begin with the raw amino-acid sequence, 431 residues long: Histidine--tRNA ligase (431 aa).

A disordered region spans residues 1–20; the sequence is MALQRPKGTQDHLPDGSPKL.

Belongs to the class-II aminoacyl-tRNA synthetase family. Homodimer.

It localises to the cytoplasm. It carries out the reaction tRNA(His) + L-histidine + ATP = L-histidyl-tRNA(His) + AMP + diphosphate + H(+). This chain is Histidine--tRNA ligase, found in Deinococcus geothermalis (strain DSM 11300 / CIP 105573 / AG-3a).